The following is a 275-amino-acid chain: Ribosomal RNA small subunit methyltransferase A (275 aa).

Residues Asn19, Leu21, Gly46, Glu71, Asp94, and Asn117 each coordinate S-adenosyl-L-methionine.

It belongs to the class I-like SAM-binding methyltransferase superfamily. rRNA adenine N(6)-methyltransferase family. RsmA subfamily.

It is found in the cytoplasm. The enzyme catalyses adenosine(1518)/adenosine(1519) in 16S rRNA + 4 S-adenosyl-L-methionine = N(6)-dimethyladenosine(1518)/N(6)-dimethyladenosine(1519) in 16S rRNA + 4 S-adenosyl-L-homocysteine + 4 H(+). Functionally, specifically dimethylates two adjacent adenosines (A1518 and A1519) in the loop of a conserved hairpin near the 3'-end of 16S rRNA in the 30S particle. May play a critical role in biogenesis of 30S subunits. The polypeptide is Ribosomal RNA small subunit methyltransferase A (Burkholderia orbicola (strain MC0-3)).